Consider the following 182-residue polypeptide: ADP-ribosylation factor-like protein 3 (182 aa).

Gly-2 is lipidated: N-myristoyl glycine. Ser-5 is subject to Phosphoserine. GTP contacts are provided by residues 24-31, Thr-48, 67-71, Gly-70, 126-129, and 159-161; these read GLDNAGKT, DIGGQ, NKQD, and SAL. Mg(2+) is bound by residues Thr-31 and Thr-48.

It belongs to the small GTPase superfamily. Arf family. As to quaternary structure, found in a complex with ARL3, RP2 and UNC119 (or UNC119B); RP2 induces hydrolysis of GTP ARL3 in the complex, leading to the release of UNC119 (or UNC119B). Interacts with RP2; interaction is direct and stimulated with the activated GTP-bound form of ARL3. Interacts with SYS1. Interacts with ARL2BP; the GTP-bound form interacts with ARL2BP. Microtubule-associated protein. Does not interact with TBCC. Interacts with RP2. Interacts with PDE6D; the interaction occurs specifically with the GTP-bound form of ARL3. Interacts with GGA1; the interaction recruits PKD1:PKD2 complex to trans-Golgi network and is required for ciliary targeting of PKD1:PKD2 complex. Interacts with DNAAF9.

The protein localises to the golgi apparatus membrane. It is found in the cytoplasm. Its subcellular location is the cytoskeleton. The protein resides in the spindle. It localises to the nucleus. The protein localises to the microtubule organizing center. It is found in the centrosome. Its subcellular location is the cell projection. The protein resides in the cilium. In terms of biological role, small GTP-binding protein which cycles between an inactive GDP-bound and an active GTP-bound form, and the rate of cycling is regulated by guanine nucleotide exchange factors (GEF) and GTPase-activating proteins (GAP). Required for normal cytokinesis and cilia signaling. Required for targeting proteins to the cilium, including myristoylated NPHP3 and prenylated INPP5E. Targets NPHP3 to the ciliary membrane by releasing myristoylated NPHP3 from UNC119B cargo adapter into the cilium. Requires assistance from GTPase-activating proteins (GAPs) like RP2 and PDE6D, in order to cycle between inactive GDP-bound and active GTP-bound forms. Required for PKD1:PKD2 complex targeting from the trans-Golgi network to the cilium. The polypeptide is ADP-ribosylation factor-like protein 3 (Mus musculus (Mouse)).